The sequence spans 383 residues: Cytochrome b (383 aa).

4 helical membrane-spanning segments follow: residues 32-52, 76-98, 113-133, and 179-199; these read VGSLLGLCLVMQMASGMFLAM, WLMRYIHANGASFFFMCLYLHMG, VWSMGVMMFMLTMATAFMGYC, and FFALHYLLPFILAALVVMHFM. Heme b-binding residues include His82 and His96. Residues His183 and His197 each coordinate heme b. His202 contacts a ubiquinone. Transmembrane regions (helical) follow at residues 225-245, 289-309, 321-341, and 348-368; these read FVFKDLMTVFVFILMFSLFVF, LGGVMAMFAALLMLLMLPMTD, LSKLSFYLFLFNFFLLMNMGQ, and FIELGQFATVYYFSYFLMLVP.

This sequence belongs to the cytochrome b family. In terms of assembly, fungal cytochrome b-c1 complex contains 10 subunits; 3 respiratory subunits, 2 core proteins and 5 low-molecular weight proteins. Cytochrome b-c1 complex is a homodimer. Heme b is required as a cofactor.

Its subcellular location is the mitochondrion inner membrane. Component of the ubiquinol-cytochrome c reductase complex (complex III or cytochrome b-c1 complex) that is part of the mitochondrial respiratory chain. The b-c1 complex mediates electron transfer from ubiquinol to cytochrome c. Contributes to the generation of a proton gradient across the mitochondrial membrane that is then used for ATP synthesis. This chain is Cytochrome b (COB), found in Debaryomyces hansenii (strain ATCC 36239 / CBS 767 / BCRC 21394 / JCM 1990 / NBRC 0083 / IGC 2968) (Yeast).